A 298-amino-acid polypeptide reads, in one-letter code: Bifunctional protein FolD (298 aa).

NADP(+)-binding positions include 166-168 (GRS), serine 191, and isoleucine 232.

The protein belongs to the tetrahydrofolate dehydrogenase/cyclohydrolase family. As to quaternary structure, homodimer.

The catalysed reaction is (6R)-5,10-methylene-5,6,7,8-tetrahydrofolate + NADP(+) = (6R)-5,10-methenyltetrahydrofolate + NADPH. It carries out the reaction (6R)-5,10-methenyltetrahydrofolate + H2O = (6R)-10-formyltetrahydrofolate + H(+). Its pathway is one-carbon metabolism; tetrahydrofolate interconversion. Catalyzes the oxidation of 5,10-methylenetetrahydrofolate to 5,10-methenyltetrahydrofolate and then the hydrolysis of 5,10-methenyltetrahydrofolate to 10-formyltetrahydrofolate. The chain is Bifunctional protein FolD from Parvibaculum lavamentivorans (strain DS-1 / DSM 13023 / NCIMB 13966).